Here is a 459-residue protein sequence, read N- to C-terminus: U1 small nuclear ribonucleoprotein 70 kDa (459 aa).

The 80-residue stretch at 99-178 folds into the RRM domain; it reads KTIFVSRISY…RRIVVDIERG (80 aa). Residues 185-459 are disordered; the sequence is KPRKFGGGLG…YSMISNENGF (275 aa). Over residues 211 to 241 the composition is skewed to basic and acidic residues; sequence EMSESREKEKEREKEKEKEKERMEKMKKRDG. Residues 242–254 show a composition bias toward low complexity; it reads GLSSNGNRSNGIS. Residues 263-408 show a composition bias toward basic and acidic residues; the sequence is DRGDRGDRDR…IDERRRDQRD (146 aa). The segment covering 426–440 has biased composition (basic residues); that stretch reads QHHHHQQNHQSHHNQ.

Its subcellular location is the nucleus. Its function is as follows. Mediates the splicing of pre-mRNA by binding to the stem loop I region of U1-snRNA. This Dictyostelium discoideum (Social amoeba) protein is U1 small nuclear ribonucleoprotein 70 kDa (snrnp70).